Here is a 354-residue protein sequence, read N- to C-terminus: Kelch domain-containing protein 8B (354 aa).

Kelch repeat units follow at residues 1–31 (MATG…FQDG), 32–79 (HLLV…VLGK), 81–127 (VLVV…ERDG), 128–175 (MVYA…LHGN), 176–222 (KIYV…MAEG), 224–281 (VFSL…SLGD), 282–329 (HVVA…QAGP), and 331–354 (LFAI…RDGV).

The protein resides in the cytoplasm. The protein localises to the midbody. Its function is as follows. Involved in pinching off the separated nuclei at the cleavage furrow and in cytokinesis. Required for mitotic integrity and maintenance of chromosomal stability. Protects cells against mitotic errors, centrosomal amplification, micronucleus formation and aneuploidy. Plays a key role of midbody function involving abscission of the daughter cells during cytokinesis and appropriate chromosomal and nuclear segregation into the daughter cells. The protein is Kelch domain-containing protein 8B (KLHDC8B) of Bos taurus (Bovine).